The sequence spans 149 residues: Transcriptional regulator MraZ (149 aa).

2 consecutive SpoVT-AbrB domains span residues 7–54 and 83–126; these read KYVN…GISH and AVQL…QPQN.

This sequence belongs to the MraZ family. In terms of assembly, forms oligomers.

The protein resides in the cytoplasm. It is found in the nucleoid. This Rickettsia peacockii (strain Rustic) protein is Transcriptional regulator MraZ.